The following is a 289-amino-acid chain: 4-hydroxy-3-methylbut-2-enyl diphosphate reductase (289 aa).

Position 13 (cysteine 13) interacts with [4Fe-4S] cluster. (2E)-4-hydroxy-3-methylbut-2-enyl diphosphate is bound by residues histidine 41 and histidine 75. Dimethylallyl diphosphate contacts are provided by histidine 41 and histidine 75. 2 residues coordinate isopentenyl diphosphate: histidine 41 and histidine 75. Cysteine 97 contributes to the [4Fe-4S] cluster binding site. Residue histidine 129 participates in (2E)-4-hydroxy-3-methylbut-2-enyl diphosphate binding. Position 129 (histidine 129) interacts with dimethylallyl diphosphate. Position 129 (histidine 129) interacts with isopentenyl diphosphate. Glutamate 131 acts as the Proton donor in catalysis. Threonine 167 serves as a coordination point for (2E)-4-hydroxy-3-methylbut-2-enyl diphosphate. Cysteine 198 is a [4Fe-4S] cluster binding site. (2E)-4-hydroxy-3-methylbut-2-enyl diphosphate contacts are provided by serine 226, serine 227, asparagine 228, and serine 270. Residues serine 226, serine 227, asparagine 228, and serine 270 each coordinate dimethylallyl diphosphate. Isopentenyl diphosphate contacts are provided by serine 226, serine 227, asparagine 228, and serine 270.

Belongs to the IspH family. The cofactor is [4Fe-4S] cluster.

The catalysed reaction is isopentenyl diphosphate + 2 oxidized [2Fe-2S]-[ferredoxin] + H2O = (2E)-4-hydroxy-3-methylbut-2-enyl diphosphate + 2 reduced [2Fe-2S]-[ferredoxin] + 2 H(+). It carries out the reaction dimethylallyl diphosphate + 2 oxidized [2Fe-2S]-[ferredoxin] + H2O = (2E)-4-hydroxy-3-methylbut-2-enyl diphosphate + 2 reduced [2Fe-2S]-[ferredoxin] + 2 H(+). Its pathway is isoprenoid biosynthesis; dimethylallyl diphosphate biosynthesis; dimethylallyl diphosphate from (2E)-4-hydroxy-3-methylbutenyl diphosphate: step 1/1. The protein operates within isoprenoid biosynthesis; isopentenyl diphosphate biosynthesis via DXP pathway; isopentenyl diphosphate from 1-deoxy-D-xylulose 5-phosphate: step 6/6. Catalyzes the conversion of 1-hydroxy-2-methyl-2-(E)-butenyl 4-diphosphate (HMBPP) into a mixture of isopentenyl diphosphate (IPP) and dimethylallyl diphosphate (DMAPP). Acts in the terminal step of the DOXP/MEP pathway for isoprenoid precursor biosynthesis. This is 4-hydroxy-3-methylbut-2-enyl diphosphate reductase from Bacteroides thetaiotaomicron (strain ATCC 29148 / DSM 2079 / JCM 5827 / CCUG 10774 / NCTC 10582 / VPI-5482 / E50).